Reading from the N-terminus, the 162-residue chain is MKYGLFLSQLERLVARWALVESPIVIKLGTRCRITLRKRHVDWTSHRFVVFPVKIYGLCVRHMNVLVWDMGHQRVERFEPFRMGFPEVQPTIDGALTNLLNQLAAADGSQTLQYRTLVTAWGNKSDHVDTHCCRWCLEWLEKKFPPPVEVGKNQGEKKQINK.

This is an uncharacterized protein from Aedes vexans (Inland floodwater mosquito).